A 207-amino-acid chain; its full sequence is Holliday junction branch migration complex subunit RuvA (207 aa).

The tract at residues 1-64 is domain I; it reads MIGRLTGILA…ETSQQLFGFS (64 aa). The interval 65–142 is domain II; the sequence is SQQDRELFRM…ALDTTPSEHS (78 aa). Residues 143–157 form a flexible linker region; it reads PTGEGAGIVRVDPVI. A domain III region spans residues 158–207; the sequence is NTNVIIADAESALIGLGYKPTEAAKAVSAAYNDTITTSEDLIRAALKGMI.

Belongs to the RuvA family. In terms of assembly, homotetramer. Forms an RuvA(8)-RuvB(12)-Holliday junction (HJ) complex. HJ DNA is sandwiched between 2 RuvA tetramers; dsDNA enters through RuvA and exits via RuvB. An RuvB hexamer assembles on each DNA strand where it exits the tetramer. Each RuvB hexamer is contacted by two RuvA subunits (via domain III) on 2 adjacent RuvB subunits; this complex drives branch migration. In the full resolvosome a probable DNA-RuvA(4)-RuvB(12)-RuvC(2) complex forms which resolves the HJ.

The protein resides in the cytoplasm. In terms of biological role, the RuvA-RuvB-RuvC complex processes Holliday junction (HJ) DNA during genetic recombination and DNA repair, while the RuvA-RuvB complex plays an important role in the rescue of blocked DNA replication forks via replication fork reversal (RFR). RuvA specifically binds to HJ cruciform DNA, conferring on it an open structure. The RuvB hexamer acts as an ATP-dependent pump, pulling dsDNA into and through the RuvAB complex. HJ branch migration allows RuvC to scan DNA until it finds its consensus sequence, where it cleaves and resolves the cruciform DNA. In Saccharophagus degradans (strain 2-40 / ATCC 43961 / DSM 17024), this protein is Holliday junction branch migration complex subunit RuvA.